The chain runs to 425 residues: Ribulose bisphosphate carboxylase (425 aa).

The active-site Proton acceptor is the K153. K155 serves as a coordination point for substrate. 3 residues coordinate Mg(2+): K179, D181, and E182. The residue at position 179 (K179) is an N6-carboxylysine. Catalysis depends on H269, which acts as the Proton acceptor. Residues R270, H302, 353-355 (SGG), and 375-378 (QAGG) contribute to the substrate site.

Belongs to the RuBisCO large chain family. Type III subfamily. In terms of assembly, homodimer. In contrast to form I RuBisCO, the form III RuBisCO is composed solely of large subunits. Requires Mg(2+) as cofactor.

It catalyses the reaction 2 (2R)-3-phosphoglycerate + 2 H(+) = D-ribulose 1,5-bisphosphate + CO2 + H2O. It carries out the reaction D-ribulose 1,5-bisphosphate + O2 = 2-phosphoglycolate + (2R)-3-phosphoglycerate + 2 H(+). Its activity is regulated as follows. Reversibly inhibited by O(2). Catalyzes the addition of molecular CO(2) and H(2)O to ribulose 1,5-bisphosphate (RuBP), generating two molecules of 3-phosphoglycerate (3-PGA). Functions in an archaeal AMP degradation pathway, together with AMP phosphorylase and R15P isomerase. The chain is Ribulose bisphosphate carboxylase from Methanocaldococcus jannaschii (strain ATCC 43067 / DSM 2661 / JAL-1 / JCM 10045 / NBRC 100440) (Methanococcus jannaschii).